The chain runs to 277 residues: MESAVDRHVFYISDGTAITAEVLGHAVMSQFPVAISSVTLPFVENISRARAVKEQIDAIYQQTGIRPLVFYSIVIPEIRDIILQSEGFCQDIVQALVAPLQQELNLDPTPVAHRTHGLNPGNLIKYDARIAAIDYTLAHDDGISLRNLDQAQVILLGVSRCGKTPTSLYLAMQYGIRAANYPFIADDMDNLVLPASLKPLQHKMFGLTINPERLAAIREERRENSRYASLRQCRMEVTEVEALYRKNKIPCLNSTNYSVEEIATKIMDIMGLNRRMY.

157 to 164 (GVSRCGKT) is an ADP binding site.

Belongs to the pyruvate, phosphate/water dikinase regulatory protein family. PSRP subfamily.

The enzyme catalyses [pyruvate, water dikinase] + ADP = [pyruvate, water dikinase]-phosphate + AMP + H(+). The catalysed reaction is [pyruvate, water dikinase]-phosphate + phosphate + H(+) = [pyruvate, water dikinase] + diphosphate. Bifunctional serine/threonine kinase and phosphorylase involved in the regulation of the phosphoenolpyruvate synthase (PEPS) by catalyzing its phosphorylation/dephosphorylation. The polypeptide is Putative phosphoenolpyruvate synthase regulatory protein (Klebsiella pneumoniae (strain 342)).